We begin with the raw amino-acid sequence, 1060 residues long: RNA-binding protein 27 (1060 aa).

Disordered regions lie at residues 80–143 (PLEP…DGKW), 160–278 (YDWR…PKRR), and 319–416 (PPPG…PPPL). Composition is skewed to basic and acidic residues over residues 84-102 (VKPEPKPLVQEKEEIKEEV) and 124-143 (SRSESSERRTREKKREDGKW). A compositionally biased stretch (basic residues) spans 165–185 (GRSKSRSKSRGLSRSRSRSRG). Over residues 186–211 (RSKDRDPNRNVEHRERSKFKSERNDL) the composition is skewed to basic and acidic residues. 2 stretches are compositionally biased toward low complexity: residues 225-235 (SSEQYSSGAQS) and 255-268 (SWSNYYNNHSSSNS). The C3H1-type zinc-finger motif lies at 273–301 (PPPKRRCRDYDERGFCVLGDLCQFDHGND). Pro residues-rich tracts occupy residues 319–356 (PPPGLPPPPPPGMLMPPMPGPGPGPGPGPGPGPGPGPG) and 371–384 (QPPPSVVLPIPRPP). Residues 387 to 402 (QSSLINSRDQPGTSAV) show a composition bias toward polar residues. Thr447 carries the post-translational modification Phosphothreonine. Arg455 carries the omega-N-methylarginine modification. The tract at residues 572–594 (LTKKPWLGKQGNNNQSKPGFLRK) is disordered. The 75-residue stretch at 600-674 (TKLEVKKIPQ…RFIRVLWHRE (75 aa)) folds into the RRM domain. Residues 754–775 (HASTNQSDTSHLLNQTGGSSGE) form a disordered region. Positions 755–770 (ASTNQSDTSHLLNQTG) are enriched in polar residues. Residues 810–887 (VQEVLKKKQE…KDELKTSSTV (78 aa)) adopt a coiled-coil conformation. A Phosphoserine modification is found at Ser928. The segment at 943-982 (GRGKTISSQGRGRGRGRGRGRGSLNHMVVDHRPKALPGGG) is disordered. Phosphoserine occurs at positions 1012 and 1020. Residues 1014–1060 (HKPKVPSISTETEEEEVKEEETETSDLFLHDDDDEDEDEYESRSWRR) are disordered. Acidic residues-rich tracts occupy residues 1024 to 1037 (ETEEEEVKEEETET) and 1044 to 1053 (DDDDEDEDEY).

It is found in the cytoplasm. Its subcellular location is the nucleus speckle. In terms of biological role, may be involved in the turnover of nuclear polyadenylated (pA+) RNA. This chain is RNA-binding protein 27, found in Mus musculus (Mouse).